The following is a 485-amino-acid chain: Ribulose bisphosphate carboxylase large chain (485 aa).

The propeptide occupies 1 to 2 (MS). Proline 3 carries the N-acetylproline modification. Lysine 14 is subject to N6,N6,N6-trimethyllysine. The substrate site is built by asparagine 123 and threonine 173. Lysine 175 functions as the Proton acceptor in the catalytic mechanism. Lysine 177 serves as a coordination point for substrate. Lysine 201, aspartate 203, and glutamate 204 together coordinate Mg(2+). At lysine 201 the chain carries N6-carboxylysine. The Proton acceptor role is filled by histidine 294. Arginine 295, histidine 327, and serine 379 together coordinate substrate.

This sequence belongs to the RuBisCO large chain family. Type I subfamily. Heterohexadecamer of 8 large chains and 8 small chains; disulfide-linked. The disulfide link is formed within the large subunit homodimers. Requires Mg(2+) as cofactor. The disulfide bond which can form in the large chain dimeric partners within the hexadecamer appears to be associated with oxidative stress and protein turnover.

The protein resides in the plastid. It localises to the chloroplast. The catalysed reaction is 2 (2R)-3-phosphoglycerate + 2 H(+) = D-ribulose 1,5-bisphosphate + CO2 + H2O. It catalyses the reaction D-ribulose 1,5-bisphosphate + O2 = 2-phosphoglycolate + (2R)-3-phosphoglycerate + 2 H(+). RuBisCO catalyzes two reactions: the carboxylation of D-ribulose 1,5-bisphosphate, the primary event in carbon dioxide fixation, as well as the oxidative fragmentation of the pentose substrate in the photorespiration process. Both reactions occur simultaneously and in competition at the same active site. The protein is Ribulose bisphosphate carboxylase large chain of Flaveria pringlei.